We begin with the raw amino-acid sequence, 218 residues long: Octanoyltransferase (218 aa).

Residues 31 to 206 (EETPDEVWLV…ELVNLLGYEQ (176 aa)) enclose the BPL/LPL catalytic domain. Substrate-binding positions include 70–77 (RGGQVTYH), 137–139 (SLG), and 150–152 (GLA). Cys-168 acts as the Acyl-thioester intermediate in catalysis.

Belongs to the LipB family.

It is found in the cytoplasm. It catalyses the reaction octanoyl-[ACP] + L-lysyl-[protein] = N(6)-octanoyl-L-lysyl-[protein] + holo-[ACP] + H(+). The protein operates within protein modification; protein lipoylation via endogenous pathway; protein N(6)-(lipoyl)lysine from octanoyl-[acyl-carrier-protein]: step 1/2. Functionally, catalyzes the transfer of endogenously produced octanoic acid from octanoyl-acyl-carrier-protein onto the lipoyl domains of lipoate-dependent enzymes. Lipoyl-ACP can also act as a substrate although octanoyl-ACP is likely to be the physiological substrate. The protein is Octanoyltransferase of Vibrio vulnificus (strain YJ016).